Consider the following 811-residue polypeptide: Glycerol-3-phosphate acyltransferase (811 aa).

Positions 309 to 314 (HRSHMD) match the HXXXXD motif motif.

This sequence belongs to the GPAT/DAPAT family.

It localises to the cell inner membrane. The catalysed reaction is sn-glycerol 3-phosphate + an acyl-CoA = a 1-acyl-sn-glycero-3-phosphate + CoA. Its pathway is phospholipid metabolism; CDP-diacylglycerol biosynthesis; CDP-diacylglycerol from sn-glycerol 3-phosphate: step 1/3. The polypeptide is Glycerol-3-phosphate acyltransferase (plsB) (Vibrio cholerae serotype O1 (strain ATCC 39315 / El Tor Inaba N16961)).